The sequence spans 295 residues: Ankyrin repeat and SOCS box protein 17 (295 aa).

Residues 146–176 form an ANK repeat; that stretch reads SGITPLFYVAQTRQSNIFKILLQYGILEREK. The SOCS box domain maps to 232–295; the sequence is LGRRPIISNW…RLQNYLNLEI (64 aa).

This sequence belongs to the ankyrin SOCS box (ASB) family.

Its pathway is protein modification; protein ubiquitination. May be a substrate-recognition component of a SCF-like ECS (Elongin-Cullin-SOCS-box protein) E3 ubiquitin-protein ligase complex which mediates the ubiquitination and subsequent proteasomal degradation of target proteins. The protein is Ankyrin repeat and SOCS box protein 17 (ASB17) of Macaca fascicularis (Crab-eating macaque).